The sequence spans 337 residues: Large ribosomal subunit protein uL3 (337 aa).

The interval 1–29 is disordered; it reads MARHHQPRKGSVAFSPRKRAARETPRVKS.

This sequence belongs to the universal ribosomal protein uL3 family. In terms of assembly, part of the 50S ribosomal subunit. Forms a cluster with proteins L14 and L24e.

In terms of biological role, one of the primary rRNA binding proteins, it binds directly near the 3'-end of the 23S rRNA, where it nucleates assembly of the 50S subunit. The sequence is that of Large ribosomal subunit protein uL3 from Methanothermobacter thermautotrophicus (strain ATCC 29096 / DSM 1053 / JCM 10044 / NBRC 100330 / Delta H) (Methanobacterium thermoautotrophicum).